The primary structure comprises 285 residues: D-apionate oxidoisomerase (285 aa).

NAD(+) is bound by residues 15–17 (GKM), Glu-36, and Asp-71. Zn(2+) is bound by residues His-116 and Glu-186.

The protein belongs to the ApnO family. Zn(2+) is required as a cofactor.

It carries out the reaction D-apionate + NAD(+) = 3-oxoisoapionate + NADH + H(+). Its pathway is carbohydrate metabolism. In terms of biological role, involved in catabolism of D-apiose. Catalyzes the conversion of D-apionate to 3-oxo-isoapionate. The polypeptide is D-apionate oxidoisomerase (Pectobacterium atrosepticum (strain SCRI 1043 / ATCC BAA-672) (Erwinia carotovora subsp. atroseptica)).